We begin with the raw amino-acid sequence, 409 residues long: Aquaporin-10 (409 aa).

2 disordered regions span residues 1–24 (MADA…TTMP) and 47–74 (ADVN…RPLV). Over residues 12 to 22 (TTGTATTAPTT) the composition is skewed to low complexity. A run of 2 helical transmembrane segments spans residues 110–130 (FLGS…VVLS) and 138–158 (LSIN…AGGI). The short motif at 164–166 (NPA) is the NPA 1 element. Residues 184 to 204 (VYMFAQYAGCICASAIVHAIY) traverse the membrane as a helical segment. An N-linked (GlcNAc...) asparagine glycan is attached at asparagine 215. 2 helical membrane-spanning segments follow: residues 241–261 (TGLA…LALT) and 270–290 (GGVV…AYGF). Positions 297–299 (NPA) match the NPA 2 motif. Residues 339 to 359 (IPVVGPHLGALLGAAIYFFFI) traverse the membrane as a helical segment.

This sequence belongs to the MIP/aquaporin (TC 1.A.8) family.

It is found in the cell membrane. Its function is as follows. Aquaglyceroporin that may modulate the water content and osmolytes during anhydrobiosis. The polypeptide is Aquaporin-10 (Milnesium tardigradum (Water bear)).